A 105-amino-acid chain; its full sequence is Nucleoid-associated protein MW0434 (105 aa).

The interval 1-33 (MRGGGNMQQMMKQMQKMQKKMAQEQEKLKEERI) is disordered. Low complexity predominate over residues 7–16 (MQQMMKQMQK). Over residues 21-33 (MAQEQEKLKEERI) the composition is skewed to basic and acidic residues.

This sequence belongs to the YbaB/EbfC family. As to quaternary structure, homodimer.

It localises to the cytoplasm. The protein resides in the nucleoid. In terms of biological role, binds to DNA and alters its conformation. May be involved in regulation of gene expression, nucleoid organization and DNA protection. This Staphylococcus aureus (strain MW2) protein is Nucleoid-associated protein MW0434.